Here is a 531-residue protein sequence, read N- to C-terminus: UDP-glucuronosyltransferase 1A6 (531 aa).

The N-terminal stretch at 1–26 (MACLLSAAQRASAGVLFVALWGTVLG) is a signal peptide. A glycan (N-linked (GlcNAc...) asparagine) is linked at asparagine 294. A helical transmembrane segment spans residues 489–505 (VIGFLLAIVLTVAFVTF).

Belongs to the UDP-glycosyltransferase family.

Its subcellular location is the microsome. It localises to the endoplasmic reticulum membrane. It catalyses the reaction glucuronate acceptor + UDP-alpha-D-glucuronate = acceptor beta-D-glucuronoside + UDP + H(+). The catalysed reaction is (5Z,8Z,11Z,14Z)-eicosatetraenoate + UDP-alpha-D-glucuronate = O-[(5Z),(8Z),(11Z),(14Z)-eicosatetraenoyl]-beta-D-glucuronate + UDP. The enzyme catalyses 15-hydroxy-(5Z,8Z,11Z,13E)-eicosatetraenoate + UDP-alpha-D-glucuronate = 15-O-(beta-D-glucuronosyl)-(5Z,8Z,11Z,14Z)-eicosatetraenoate + UDP + H(+). It carries out the reaction (E)-ferulate + UDP-alpha-D-glucuronate = (E)-4-O-(beta-D-glucuronosyl)-ferulate + UDP + H(+). It catalyses the reaction (E)-ferulate + UDP-alpha-D-glucuronate = (E)-ferulic acid beta-D-glucuronate ester + UDP. Its function is as follows. UDP-glucuronosyltransferase (UGT) that catalyzes phase II biotransformation reactions in which lipophilic substrates are conjugated with glucuronic acid to facilitate their inactivation and excretion from the body. Essential for the elimination and detoxification of drugs, xenobiotics and endogenous compounds. Involved in the glucuronidation of arachidonic acid (AA) and AA-derived eicosanoids including 15-HETE and 20-HETE. Conjugates small planar phenolic molecules such as 4-nitrophenol, 1-naphthol, and 4-methylumbelliferone. The bulky phenol 4-hydroxybiphenyl, androgens and estrogens are not substrates. 2-hydroxybiphenyl is an excellent substrate. Involved in the glucuronidation of the phytochemical ferulic acid at the phenolic or the carboxylic acid group. This is UDP-glucuronosyltransferase 1A6 (UGT1) from Oryctolagus cuniculus (Rabbit).